The chain runs to 267 residues: Diphthine synthase (267 aa).

S-adenosyl-L-methionine-binding positions include Leu9, Asp85, Val88, 113-114 (SI), Leu170, Ala211, and His236.

Belongs to the diphthine synthase family. Homodimer.

It carries out the reaction 2-[(3S)-amino-3-carboxypropyl]-L-histidyl-[translation elongation factor 2] + 3 S-adenosyl-L-methionine = diphthine-[translation elongation factor 2] + 3 S-adenosyl-L-homocysteine + 3 H(+). It functions in the pathway protein modification; peptidyl-diphthamide biosynthesis. S-adenosyl-L-methionine-dependent methyltransferase that catalyzes the trimethylation of the amino group of the modified target histidine residue in translation elongation factor 2 (EF-2), to form an intermediate called diphthine. The three successive methylation reactions represent the second step of diphthamide biosynthesis. This is Diphthine synthase from Methanococcoides burtonii (strain DSM 6242 / NBRC 107633 / OCM 468 / ACE-M).